The following is a 463-amino-acid chain: MAAGRDGVIHLLRQLQRASCRCPAHSHTYSQAPATARTTDYAFEMAVSSIRYGENVTQEIGMDLQNWGTRNVCVMTDRNLSELSPVKAVLNSLVKNGINFKLYDSVRVEPTDKSFMDAIEFAKKGQFDAFVAVGGGSVIDTCKAANLYSSSPDSDFLDYVNPPIGKGKAVTVPLKPLIAVPTTSGTGSETTGIAIFDYEELKAKTGIASRAIKPTLGLIDPAHTLSMPERVVANSGFDVLCHSLESYTALPYNMRSPCPTNPINRPAYQGSNPISDVWAKHALRIVAKFLKRAVRNPDDREARFAMHLASSFAGVGFGNAGVHLCHGMSYPIAGHVKTYRAKDYKVDHPLVPHGLSVVLTSPAVFSFTGLMCPERHLEAAEILGADLRTAKIKDAGLILADTLRKFLYDLNVDDGLAAVGYTAEDIPALVKGTLPQERVTKLSPRAHSEEELAALFEASMKLY.

Belongs to the iron-containing alcohol dehydrogenase family. Hydroxyacid-oxoacid transhydrogenase subfamily.

It localises to the mitochondrion. The enzyme catalyses (S)-3-hydroxybutanoate + 2-oxoglutarate = (R)-2-hydroxyglutarate + acetoacetate. The catalysed reaction is 4-hydroxybutanoate + 2-oxoglutarate = (R)-2-hydroxyglutarate + succinate semialdehyde. In terms of biological role, catalyzes the cofactor-independent reversible oxidation of gamma-hydroxybutyrate (GHB) to succinic semialdehyde (SSA) coupled to reduction of 2-ketoglutarate (2-KG) to D-2-hydroxyglutarate (D-2-HG). L-3-hydroxybutyrate (L-3-OHB) is also a substrate for HOT when using 2-KG as hydrogen acceptor, resulting in the formation of D-2-HG. This Xenopus laevis (African clawed frog) protein is Hydroxyacid-oxoacid transhydrogenase, mitochondrial (adhfe1).